Consider the following 240-residue polypeptide: Glutathione S-transferase omega-1 (240 aa).

Ser2 carries the N-acetylserine modification. Residues 22 to 101 (GQIRVYSMRF…YLDEAYPEKK (80 aa)) form the GST N-terminal domain. Cys32 serves as the catalytic Nucleophile. An N6-acetyllysine modification is found at Lys57. Glutathione-binding positions include Lys59, Val72, and 85–86 (ES). Residues 106 to 227 (DPYKKARQKM…AKTYREYLNL (122 aa)) form the GST C-terminal domain. Ser129 is modified (phosphoserine). At Lys152 the chain carries N6-acetyllysine.

It belongs to the GST superfamily. Omega family. In terms of assembly, homodimer.

The protein resides in the cytoplasm. Its subcellular location is the cytosol. The catalysed reaction is RX + glutathione = an S-substituted glutathione + a halide anion + H(+). It carries out the reaction L-dehydroascorbate + 2 glutathione = glutathione disulfide + L-ascorbate. The enzyme catalyses methylarsonate + 2 glutathione + H(+) = methylarsonous acid + glutathione disulfide + H2O. Exhibits glutathione-dependent thiol transferase and dehydroascorbate reductase activities. Has S-(phenacyl)glutathione reductase activity. Also has glutathione S-transferase activity. Participates in the biotransformation of inorganic arsenic and reduces monomethylarsonic acid (MMA) and dimethylarsonic acid. The polypeptide is Glutathione S-transferase omega-1 (Gsto1) (Mus musculus (Mouse)).